We begin with the raw amino-acid sequence, 132 residues long: Large ribosomal subunit protein eL8 (132 aa).

Lys-8 is modified (N6-acetyllysine; alternate). Residue Lys-8 forms a Glycyl lysine isopeptide (Lys-Gly) (interchain with G-Cter in SUMO2); alternate linkage. Lys-36 is covalently cross-linked (Glycyl lysine isopeptide (Lys-Gly) (interchain with G-Cter in SUMO2)). Lys-128 is modified (N6-acetyllysine).

Belongs to the eukaryotic ribosomal protein eL8 family. As to quaternary structure, component of the large ribosomal subunit. Interacts with CRY1. Interacts with DICER1, AGO2, TARBP2, MOV10 and EIF6; they form a large RNA-induced silencing complex (RISC).

The protein localises to the cytoplasm. Component of the large ribosomal subunit. The ribosome is a large ribonucleoprotein complex responsible for the synthesis of proteins in the cell. This chain is Large ribosomal subunit protein eL8 (RPL7A), found in Sus scrofa (Pig).